Reading from the N-terminus, the 150-residue chain is Large ribosomal subunit protein bL9 (150 aa).

This sequence belongs to the bacterial ribosomal protein bL9 family.

Functionally, binds to the 23S rRNA. The protein is Large ribosomal subunit protein bL9 of Corynebacterium aurimucosum (strain ATCC 700975 / DSM 44827 / CIP 107346 / CN-1) (Corynebacterium nigricans).